Here is a 101-residue protein sequence, read N- to C-terminus: Trp operon repressor homolog (101 aa).

A DNA-binding region spans residues 59–82 (QREIQQNLSTSAATITRGSNMLKM).

It belongs to the TrpR family. Homodimer.

The protein resides in the cytoplasm. Its function is as follows. This protein is an aporepressor. When complexed with L-tryptophan it binds the operator region of the trp operon and prevents the initiation of transcription. The polypeptide is Trp operon repressor homolog (Actinobacillus succinogenes (strain ATCC 55618 / DSM 22257 / CCUG 43843 / 130Z)).